A 290-amino-acid chain; its full sequence is uncharacterized protein (290 aa).

This is an uncharacterized protein from Lepidoptera (butterflies and moths).